A 585-amino-acid chain; its full sequence is Arginine--tRNA ligase (585 aa).

Positions 126 to 136 match the 'HIGH' region motif; it reads PNIAKEMHVGH.

This sequence belongs to the class-I aminoacyl-tRNA synthetase family. In terms of assembly, monomer.

The protein resides in the cytoplasm. The enzyme catalyses tRNA(Arg) + L-arginine + ATP = L-arginyl-tRNA(Arg) + AMP + diphosphate. The polypeptide is Arginine--tRNA ligase (Picosynechococcus sp. (strain ATCC 27264 / PCC 7002 / PR-6) (Agmenellum quadruplicatum)).